Here is a 258-residue protein sequence, read N- to C-terminus: Imidazole glycerol phosphate synthase subunit HisF (258 aa).

Catalysis depends on residues aspartate 12 and aspartate 131.

Belongs to the HisA/HisF family. As to quaternary structure, heterodimer of HisH and HisF.

The protein resides in the cytoplasm. It carries out the reaction 5-[(5-phospho-1-deoxy-D-ribulos-1-ylimino)methylamino]-1-(5-phospho-beta-D-ribosyl)imidazole-4-carboxamide + L-glutamine = D-erythro-1-(imidazol-4-yl)glycerol 3-phosphate + 5-amino-1-(5-phospho-beta-D-ribosyl)imidazole-4-carboxamide + L-glutamate + H(+). Its pathway is amino-acid biosynthesis; L-histidine biosynthesis; L-histidine from 5-phospho-alpha-D-ribose 1-diphosphate: step 5/9. Its function is as follows. IGPS catalyzes the conversion of PRFAR and glutamine to IGP, AICAR and glutamate. The HisF subunit catalyzes the cyclization activity that produces IGP and AICAR from PRFAR using the ammonia provided by the HisH subunit. The protein is Imidazole glycerol phosphate synthase subunit HisF of Sinorhizobium fredii (strain NBRC 101917 / NGR234).